Reading from the N-terminus, the 603-residue chain is Multicopper oxidase MCE (603 aa).

An N-terminal signal peptide occupies residues 1–21; sequence MNTFICSALICLSWLPGFIQA. In terms of domain architecture, Plastocyanin-like 1 spans 30-144; it reads ITYAKGAPDG…YGALWIRPKE (115 aa). Asn-75 carries an N-linked (GlcNAc...) asparagine glycan. Positions 79, 81, 123, and 125 each coordinate Cu cation. N-linked (GlcNAc...) asparagine glycans are attached at residues Asn-155, Asn-180, Asn-235, Asn-256, Asn-272, Asn-275, Asn-388, Asn-394, Asn-413, and Asn-455. The 181-residue stretch at 173–353 folds into the Plastocyanin-like 2 domain; it reads LIVSDWSNFT…TPGDYTIRLP (181 aa). The 132-residue stretch at 450–581 folds into the Plastocyanin-like 3 domain; sequence LLYNPNSTAA…GGMAGVIMDG (132 aa). His-495 provides a ligand contact to Cu cation. Residues Asn-512 and Asn-595 are each glycosylated (N-linked (GlcNAc...) asparagine).

This sequence belongs to the multicopper oxidase family.

It catalyses the reaction 4 monapinone A + O2 = 2 dinapinone A + 2 H2O. The catalysed reaction is 4 monapinone E + O2 = 2 dinapinone E + 2 H2O. It participates in secondary metabolite biosynthesis. Multicopper oxidase; part of the gene cluster that mediates the biosynthesis of dinapinones DPA1 (or (M)-DPA) and DPA2 (or (P)-DPA), biaryl dihydronaphthopyranones that act in concert as inhibitors of triacylglycerol accumulation in mammalian cells. The first step in the pathway corresponds to the biosynthesis of dihydroxy-decanoyl-CoA by the fungal type I fatty acid synthase (formed by ORF4 and ORF5). The cluster-specific polyketide synthase (ORF7) then accepts and extends dihydroxy-decanoyl-CoA with 6 malonyl-CoA moieties and cyclizes the molecule to produce a putative polyhydroxynaphthopyranone intermediate, which is further methylated by the cluster-specific methyltransferase (ORF1) at 7-OH to produce monapinone A (MPA). MCE catalyzes the regioselective biaryl coupling of monapinone A (MPA) at the 8,8'-positions to afford dimeric atropisomers DPA1 and DPA2 in a ratio of approximately 1:2.5. Monapinone E (MPE) also appears to be a substrate for MCE and provides the atropisomers dinapinones DPE1 (or (M)-DPE) and DPE2 (or (P)-DPE). In Talaromyces pinophilus (Penicillium pinophilum), this protein is Multicopper oxidase MCE.